Consider the following 400-residue polypeptide: Zinc finger protein 514 (400 aa).

In terms of domain architecture, KRAB spans 1 to 72 (MTFEDVAVEF…EREISTGAHS (72 aa)). C2H2-type zinc fingers lie at residues 204 to 226 (CKCN…QRCH), 232 to 254 (YECS…QRTH), 260 to 282 (YECS…YRFH), 288 to 310 (YKCN…QRTH), 316 to 338 (YECR…YRFH), 344 to 366 (YKCN…YRFH), and 372 to 394 (YKCN…QRSH).

This sequence belongs to the krueppel C2H2-type zinc-finger protein family.

It localises to the nucleus. Functionally, may be involved in transcriptional regulation. This is Zinc finger protein 514 (ZNF514) from Homo sapiens (Human).